A 192-amino-acid chain; its full sequence is Lipid A acyltransferase PagP (192 aa).

Positions 1–24 are cleaved as a signal peptide; it reads MWLRFCAPALMAWYWVFFPSTSQA. Residues H63, D106, and S107 contribute to the active site.

This sequence belongs to the lipid A palmitoyltransferase family. As to quaternary structure, homodimer.

It is found in the cell outer membrane. It catalyses the reaction a lipid A + a 1,2-diacyl-sn-glycero-3-phosphocholine = a hepta-acyl lipid A + a 2-acyl-sn-glycero-3-phosphocholine. It carries out the reaction a lipid IVA + a 1,2-diacyl-sn-glycero-3-phosphocholine = a lipid IVB + a 2-acyl-sn-glycero-3-phosphocholine. The catalysed reaction is a lipid IIA + a 1,2-diacyl-sn-glycero-3-phosphocholine = a lipid IIB + a 2-acyl-sn-glycero-3-phosphocholine. Functionally, transfers a fatty acid residue from the sn-1 position of a phospholipid to the N-linked hydroxyfatty acid chain on the proximal unit of lipid A or its precursors. The polypeptide is Lipid A acyltransferase PagP (Musicola paradisiaca (strain Ech703) (Dickeya paradisiaca)).